Consider the following 372-residue polypeptide: Signal peptide peptidase-like 1 (372 aa).

The Lumenal segment spans residues 1-6 (METLWT). The helical transmembrane segment at 7 to 27 (LLYLLEPAPATLIVTAVTVTF) threads the bilayer. At 28–54 (ASAFRALNYGKEMERNRDFSEASITLD) the chain is on the cytoplasmic side. A helical transmembrane segment spans residues 55–77 (SSQALMIPVMSSCSLLLMFYLFS). At 78-81 (SVSQ) the chain is on the lumenal side. A helical transmembrane segment spans residues 82 to 104 (LLTAFTAIASVSSLFYWLSPYAV). At 105 to 123 (YMKTQLGLSDPFLSRCCSK) the chain is on the cytoplasmic side. Residues 124–146 (SFTRIQGLLLVACAMTVVAWLIS) form a helical membrane-spanning segment. Residues 147–149 (GHW) lie on the Lumenal side of the membrane. A helical membrane pass occupies residues 150-167 (VLNNLLGISICIAFVSHV). The Cytoplasmic portion of the chain corresponds to 168–171 (RLPN). The helical transmembrane segment at 172–192 (IKICAMLLVCLFVYDIFWVFF) threads the bilayer. Residue Asp-186 is part of the active site. Residues 193 to 257 (SERFFGANVM…GVVPGVSASD (65 aa)) are Lumenal-facing. The helical transmembrane segment at 258–278 (FMMLGLGDMAIPAMLLALVLC) threads the bilayer. Asp-265 is a catalytic residue. Over 279 to 301 (FDHRKTRDVVNIFDLKSSKGHKY) the chain is Cytoplasmic. Residues 302-322 (IWYALPGYAIGLVAALAAGVL) form a helical membrane-spanning segment. Topologically, residues 323 to 325 (THS) are lumenal. A helical transmembrane segment spans residues 326–346 (PQPALLYLVPSTLGPVIFMSW). Positions 328–330 (PAL) match the PAL motif. Topologically, residues 347 to 372 (RRKDLAELWEGPALSNPIEKSHEIEI) are cytoplasmic.

The protein belongs to the peptidase A22B family. As to expression, ubiquitous.

The protein resides in the endosome membrane. Its function is as follows. Intramembrane-cleaving aspartic protease (I-CLiP) that cleaves type II membrane signal peptides in the hydrophobic plane of the membrane. The polypeptide is Signal peptide peptidase-like 1 (SPPL1) (Arabidopsis thaliana (Mouse-ear cress)).